The chain runs to 858 residues: MSAHAAPSPEALSRRAEFKAAKTEMLERFRHAANVASLMHALSKLTDDALKRVWDECGLPATLALVAVGGYGRGELAPYSDVDILVLLPDAHDAALDARIERFIGMAWDLGLEIGSSVRTVAQCIEEASQDVTVQTSLLEARRIVGSTALFERFTVRYHEALDARAFFTAKVLEMRQRHAKFQDTPYSLEPNVKESPGGLRDLQTILWIARAAGFGSSWRELDTRGLITDREARELRRNEGFLKTLRARLHVIAGRRQDMLVFDLQTQAAESFGYQPTQAKRASEQLMRRYYWAAKAVTQLATILIQNIEAQLFPATSGITRVLSADRFVEKQGMLEIVDDGVFERHPDAILEAFLLYETTRGVKGLSARTLRALYNSREIMNNAWRRDPQNRATFMRILQQPEGITHAFRLMNQTSVLGRYLLNFRRIVGQMQHDLYHVYTVDQHILMVLRNIRRFAVAEHAHEYPFCSQLIGNFERPWVLYVAALFHDIAKGRGGDHSTLGMADARRFCREHGIAGDDAALIVWLVQHHLTMSQVAQKQDTSDPEVIKRFAEVVGNERYLTALYLLTVADIRGTSPKVWNTWKGKLLEDLYRITLAVLGGANPDAHSELKSRQEQALALLRLETVPDDAHRALWDQLDVGFFLRHDAADIAWQTRVLYRHVNAETAIVRARPSPIGDALQVLVYVKDRPDLFAGICAYFDRNGLSVLDARVSTTRHGYALDNFIVTQTERDVRYRDIANLVEQQLATRLAETASLPEPSKGRLSRLSRTFPITPRVDLRADERGQYYILSVSANDRPGLLYSIARVLAEHRIGVHAARINTLGERVEDIFLLAGAGLSDNRLQIQLETELLRAIAV.

The segment at 1–324 is uridylyltransferase; sequence MSAHAAPSPE…PATSGITRVL (324 aa). The interval 325-681 is uridylyl-removing; it reads SADRFVEKQG…ARPSPIGDAL (357 aa). The HD domain occupies 443-565; sequence VDQHILMVLR…VGNERYLTAL (123 aa). 2 ACT domains span residues 682-763 and 790-858; these read QVLV…PSKG and ILSV…AIAV.

It belongs to the GlnD family. Mg(2+) is required as a cofactor.

It carries out the reaction [protein-PII]-L-tyrosine + UTP = [protein-PII]-uridylyl-L-tyrosine + diphosphate. It catalyses the reaction [protein-PII]-uridylyl-L-tyrosine + H2O = [protein-PII]-L-tyrosine + UMP + H(+). Its activity is regulated as follows. Uridylyltransferase (UTase) activity is inhibited by glutamine, while glutamine activates uridylyl-removing (UR) activity. Modifies, by uridylylation and deuridylylation, the PII regulatory proteins (GlnB and homologs), in response to the nitrogen status of the cell that GlnD senses through the glutamine level. Under low glutamine levels, catalyzes the conversion of the PII proteins and UTP to PII-UMP and PPi, while under higher glutamine levels, GlnD hydrolyzes PII-UMP to PII and UMP (deuridylylation). Thus, controls uridylylation state and activity of the PII proteins, and plays an important role in the regulation of nitrogen assimilation and metabolism. The protein is Bifunctional uridylyltransferase/uridylyl-removing enzyme of Burkholderia orbicola (strain AU 1054).